The chain runs to 232 residues: Replicative helicase loading/DNA remodeling protein DnaD (232 aa).

The interval 1 to 98 (MKKQQFIDMQ…QNGIKFEKYS (98 aa)) is N-terminal domain. The interval 1–116 (MKKQQFIDMQ…YEYIQLAQNQ (116 aa)) is DDBH1. The C-terminal domain stretch occupies residues 99–205 (LQPLWGKLYE…VEQAKIHSQK (107 aa)). A DDBH2 region spans residues 131-200 (TIFEEEFARP…NGLKTVEQAK (70 aa)). Residues 206 to 232 (FRRVQAKQNEPQKEYKRQVPFYNWLEQ) are C-terminal tail.

Belongs to the DnaB/DnaD family. The DNA replisome assembles sequentially on oriC in this order; DnaA, DnaD, DnaB, DnaI-DnaC helicase. Homodimer. Homotetramer. Oligomerization in vitro is concentration dependent. Part of the replication restart primosome which assembles in this order; PriA, DnaD then DnaB. The preferred DNA substrate mimics an arrested DNA replication fork with unreplicated lagging strand. Interacts with DnaA, DnaB and PriA. Interaction with DnaB requires DnaD to dimerize.

The protein localises to the cytoplasm. Its activity is regulated as follows. Recruitment to oriC requires DnaA but not DnaB, DnaC or DnaI and is blocked by SirA. Functionally, required to load replicative helicase DnaC onto replication forks. Binds to a DnaD recognition element (DRE) which has pairs of 5'-TnnT-3' motifs; there is a strong DRE at oriC opposite the DnaA-trios recognized by DnaA. During DNA replication from the origin of replication (oriC) in the DNA replisome, DnaD is required after DnaA, before DnaB and subsequent helicase DnaC loading. A component of the replication restart primosome, which reloads the replicative helicase on sites other than oriC. DnaB, DnaD and DnaI may also be required for a PriA-independent pathway of replication fork restart. DnaB and DnaD work together to allow DnaB access to single-stranded (ss)DNA. Has DNA remodeling activity that converts supercoiled plasmid into an open circular form; DnaD forms scaffolds inside the plasmid DNA. Plasmid relaxation incorporates both wrapping around the DnaD protein scaffold and simultaneous untwisting, no nicking of the DNA is seen. Also converts linear DNA into an open circular form. Disrupts a replicative helicase-DnaI complex. Inhibits the ability of DnaA-ATP to form a helix on DNA; does not disassemble preformed helices in vitro. Binds ssDNA, and replication fork-like substrates, supercoiled plasmid, but not stably to short double-stranded (ds)DNA. DnaD stimulates DnaB DNA-binding activities. DnaB and DnaD are required to load helicase on the repN plasmid origin of replication (oriN). Causes a severe growth defect upon overexpression even in an oriC-independent strain. This Bacillus subtilis (strain 168) protein is Replicative helicase loading/DNA remodeling protein DnaD.